We begin with the raw amino-acid sequence, 819 residues long: Proteome of basal body protein 15 (819 aa).

Composition is skewed to low complexity over residues 46-59 and 572-581; these read PASSPAKAPANPGR and RQQQQQQQHT. Disordered stretches follow at residues 46-72 and 564-590; these read PASSPAKAPANPGRSAPPSPGPRLATG and ERQRRLLERQQQQQQQHTKGGGGGGGV. Residues 546–580 are a coiled coil; the sequence is YVVLREAVARVQARMEQQERQRRLLERQQQQQQQH.

It is found in the cytoplasm. The protein localises to the cytoskeleton. Its subcellular location is the microtubule organizing center. The protein resides in the centrosome. It localises to the centriole. The chain is Proteome of basal body protein 15 from Chlamydomonas reinhardtii (Chlamydomonas smithii).